A 626-amino-acid polypeptide reads, in one-letter code: MSETVERHEFGAEVGRLLDLVVHALYSDREIFLRELVANAADATDRRRFEALTNEALALPSDARVLIAPDKAARTLTISDAGIGMSKEDLAQNLGTIARSGTRAFSQALGERAAEGGEDQRPSLIGQFGVGFYSAFMVADRVTVTSRRAGSEEAWTWASDGKGSYTLEPASREQPGTDIVLHMKEDADEYLESYRLDHVVRKWADNIAVPIAIRDAEGKEEAANRGTALWRKPKSEITEEQYKEFYRTVSHGFDEPWATLHWRAEGALEFTGLLFVPSMKPFMPMEDDRRSKVRLHVRRMFITDEAELLPNWLRFVHGVVDTDDLPLNVSREMLQSTPTLQKIRRAVTTRVINELSSRSKNTEKAEEYQKFFENFGPVLKEGIYEDFERRAEIAPLLRFRSSTEGGWTSLPEYVARMKPEQEAIYYLVADDVEALKNSAQLEGFRARRVEVLLLSDHVDAFWPEQLGKFEDKPLRSVTQGSADLAKLKPEGETAEAAPALDTLVAALKLALEPDVSDVRTTDRLVDSAVVLATSGMGPDLQMQRLLRRAGRGFGGSAPILEINPRHALIRSLNERAEAGEDLKAEAGTLLDLARVQDGDTPRDPVAFARAVAAALAGTAAKPAGSA.

Residues 1–331 are a; substrate-binding; it reads MSETVERHEF…TDDLPLNVSR (331 aa). Residues 332–544 form a b region; it reads EMLQSTPTLQ…GMGPDLQMQR (213 aa). The c stretch occupies residues 545-626; sequence LLRRAGRGFG…GTAAKPAGSA (82 aa).

This sequence belongs to the heat shock protein 90 family. As to quaternary structure, homodimer.

It localises to the cytoplasm. Functionally, molecular chaperone. Has ATPase activity. This is Chaperone protein HtpG from Methylorubrum extorquens (strain CM4 / NCIMB 13688) (Methylobacterium extorquens).